The sequence spans 685 residues: Translation initiation factor IF-2 (685 aa).

The disordered stretch occupies residues 60 to 79 (ISLAKTREPSKEKTEAKKPP). Positions 64-79 (KTREPSKEKTEAKKPP) are enriched in basic and acidic residues. Positions 175–352 (NRPPVVTVMG…DIRCIPDSPV (178 aa)) constitute a tr-type G domain. The interval 184–191 (GHVDHGKT) is G1. Residue 184-191 (GHVDHGKT) participates in GTP binding. The segment at 209–213 (GITQS) is G2. The segment at 230-233 (DTPG) is G3. Residues 230 to 234 (DTPGH) and 284 to 287 (NKID) each bind GTP. The segment at 284–287 (NKID) is G4. Residues 321–323 (SAR) are G5.

It belongs to the TRAFAC class translation factor GTPase superfamily. Classic translation factor GTPase family. IF-2 subfamily.

It is found in the cytoplasm. In terms of biological role, one of the essential components for the initiation of protein synthesis. Protects formylmethionyl-tRNA from spontaneous hydrolysis and promotes its binding to the 30S ribosomal subunits. Also involved in the hydrolysis of GTP during the formation of the 70S ribosomal complex. The chain is Translation initiation factor IF-2 from Fervidobacterium nodosum (strain ATCC 35602 / DSM 5306 / Rt17-B1).